A 357-amino-acid polypeptide reads, in one-letter code: Large ribosomal subunit protein mL45 (357 aa).

Positions 333 to 357 (EAKALPLRTTEKLEEAKKEKEQQEI) are disordered. Residues 341-357 (TTEKLEEAKKEKEQQEI) are compositionally biased toward basic and acidic residues.

This sequence belongs to the mitochondrion-specific ribosomal protein mL45 family.

Its subcellular location is the mitochondrion. In Caenorhabditis elegans, this protein is Large ribosomal subunit protein mL45 (mrpl-45).